We begin with the raw amino-acid sequence, 218 residues long: Glycerol-3-phosphate acyltransferase (218 aa).

The next 5 membrane-spanning stretches (helical) occupy residues 10-30, 60-80, 88-108, 125-145, and 165-185; these read LTLGIAIVGGYLLGSIPFGLI, DLAAITLLGDAGKGVVAVLLA, PAIIALAGGSAFLGHLFPVWL, SAAWPVGVAAGATWLAMAFLF, and AFDQPYPFMGLCLFMAVLIFI.

It belongs to the PlsY family. As to quaternary structure, probably interacts with PlsX.

The protein resides in the cell inner membrane. The catalysed reaction is an acyl phosphate + sn-glycerol 3-phosphate = a 1-acyl-sn-glycero-3-phosphate + phosphate. The protein operates within lipid metabolism; phospholipid metabolism. Its function is as follows. Catalyzes the transfer of an acyl group from acyl-phosphate (acyl-PO(4)) to glycerol-3-phosphate (G3P) to form lysophosphatidic acid (LPA). This enzyme utilizes acyl-phosphate as fatty acyl donor, but not acyl-CoA or acyl-ACP. The sequence is that of Glycerol-3-phosphate acyltransferase from Caulobacter vibrioides (strain ATCC 19089 / CIP 103742 / CB 15) (Caulobacter crescentus).